Here is a 155-residue protein sequence, read N- to C-terminus: Ribosome maturation factor RimP (155 aa).

The protein belongs to the RimP family.

The protein resides in the cytoplasm. In terms of biological role, required for maturation of 30S ribosomal subunits. The chain is Ribosome maturation factor RimP from Gemmatimonas aurantiaca (strain DSM 14586 / JCM 11422 / NBRC 100505 / T-27).